We begin with the raw amino-acid sequence, 398 residues long: Acetate kinase (398 aa).

Residue Asn7 coordinates Mg(2+). Lys14 contributes to the ATP binding site. Arg91 is a substrate binding site. The Proton donor/acceptor role is filled by Asp148. Residues 208–212, 282–284, and 330–334 each bind ATP; these read HLGNG, DFR, and GVGEN. Mg(2+) is bound at residue Glu383.

The protein belongs to the acetokinase family. Homodimer. Requires Mg(2+) as cofactor. Mn(2+) serves as cofactor.

It localises to the cytoplasm. The catalysed reaction is acetate + ATP = acetyl phosphate + ADP. It functions in the pathway metabolic intermediate biosynthesis; acetyl-CoA biosynthesis; acetyl-CoA from acetate: step 1/2. In terms of biological role, catalyzes the formation of acetyl phosphate from acetate and ATP. Can also catalyze the reverse reaction. The chain is Acetate kinase from Carboxydothermus hydrogenoformans (strain ATCC BAA-161 / DSM 6008 / Z-2901).